The chain runs to 169 residues: Der GTPase-activating protein YihI (169 aa).

Disordered regions lie at residues 1-83 and 150-169; these read MNPL…PTKP and DEEE…LKGN. A compositionally biased stretch (basic and acidic residues) spans 21–30; sequence NREELNAEGR. The span at 31–40 shows a compositional bias: basic residues; sequence ARKREKKHRG. 2 stretches are compositionally biased toward basic and acidic residues: residues 51–66 and 150–161; these read SGDK…DPRL and DEEEREEEKQDD.

It belongs to the YihI family. As to quaternary structure, interacts with Der.

A GTPase-activating protein (GAP) that modifies Der/EngA GTPase function. May play a role in ribosome biogenesis. The sequence is that of Der GTPase-activating protein YihI from Photorhabdus laumondii subsp. laumondii (strain DSM 15139 / CIP 105565 / TT01) (Photorhabdus luminescens subsp. laumondii).